The sequence spans 454 residues: CCA-adding enzyme (454 aa).

Residues S51 and K54 each coordinate ATP. The CTP site is built by S51 and K54. D63, D65, and D118 together coordinate Mg(2+). The ATP site is built by H141, K161, and Y170. CTP contacts are provided by H141, K161, and Y170.

The protein belongs to the tRNA nucleotidyltransferase/poly(A) polymerase family. Archaeal CCA-adding enzyme subfamily. In terms of assembly, homodimer. Mg(2+) is required as a cofactor.

It carries out the reaction a tRNA precursor + 2 CTP + ATP = a tRNA with a 3' CCA end + 3 diphosphate. It catalyses the reaction a tRNA with a 3' CCA end + 2 CTP + ATP = a tRNA with a 3' CCACCA end + 3 diphosphate. Its function is as follows. Catalyzes the addition and repair of the essential 3'-terminal CCA sequence in tRNAs without using a nucleic acid template. Adds these three nucleotides in the order of C, C, and A to the tRNA nucleotide-73, using CTP and ATP as substrates and producing inorganic pyrophosphate. tRNA 3'-terminal CCA addition is required both for tRNA processing and repair. Also involved in tRNA surveillance by mediating tandem CCA addition to generate a CCACCA at the 3' terminus of unstable tRNAs. While stable tRNAs receive only 3'-terminal CCA, unstable tRNAs are marked with CCACCA and rapidly degraded. The protein is CCA-adding enzyme of Methanothermobacter thermautotrophicus (strain ATCC 29096 / DSM 1053 / JCM 10044 / NBRC 100330 / Delta H) (Methanobacterium thermoautotrophicum).